Reading from the N-terminus, the 469-residue chain is Solute carrier family 52, riboflavin transporter, member 3 (469 aa).

At 1–6 (MALLTH) the chain is on the cytoplasmic side. Residues 7–27 (LLVCTFGMGSWVAINGLWVEL) form a helical membrane-spanning segment. Residues 28 to 43 (PLLVTELPEGWYLPSY) lie on the Extracellular side of the membrane. A helical membrane pass occupies residues 44–64 (LTMVIQLANIGPLLVTLLHHF). The Cytoplasmic segment spans residues 65–71 (QPSCLSE). The chain crosses the membrane as a helical span at residues 72-92 (VPIIFTVLAVGTVACALFAFL). Residues 93–105 (WNVTSWVLDGRHS) are Extracellular-facing. N-linked (GlcNAc...) asparagine glycosylation occurs at Asn94. A helical membrane pass occupies residues 106–126 (IAFMVLTFFLALVDCTSSVTF). Residues 127–137 (LPFMSRLPACY) are Cytoplasmic-facing. The chain crosses the membrane as a helical span at residues 138 to 158 (LTTFFVGEGLSSLLPALVALA). Residues 159 to 220 (QGSGLTTCVN…SRYLPANFSP (62 aa)) are Extracellular-facing. Asn168 carries N-linked (GlcNAc...) asparagine glycosylation. A helical membrane pass occupies residues 221–241 (LVFFLLLSFMMACCLAAFFLL). Over 242-297 (QRQPRPRESSIEDLLTSQVTLHSIRPREGDDLGPPDPGPSSKAQGLPEEKTASDHP) the chain is Cytoplasmic. At Ser251 the chain carries Phosphoserine. Residues 266–290 (RPREGDDLGPPDPGPSSKAQGLPEE) form a disordered region. Residues 298–318 (AHLAFIYVLVAFVNALTNGVL) form a helical membrane-spanning segment. Residues 319–335 (PSVQTYSCLSYGPVAYH) lie on the Extracellular side of the membrane. Residues 336-356 (LSATLSSMANPLACFLSMFLP) traverse the membrane as a helical segment. Residues 357-361 (HRSLP) lie on the Cytoplasmic side of the membrane. Residues 362 to 382 (FLGVLTVLGTGFGAYNMAMAV) traverse the membrane as a helical segment. Topologically, residues 383 to 396 (MSPCPLMQGHWAGE) are extracellular. Residues 397-417 (ILIVASWVLFIGCLSYVKVML) traverse the membrane as a helical segment. At 418-427 (GVILRDRSRS) the chain is on the cytoplasmic side. The chain crosses the membrane as a helical span at residues 428-448 (ALVWCGAAVQLGSLLGALLMF). Topologically, residues 449–469 (PLVNVLRLFSSADFCSLQCSA) are extracellular.

This sequence belongs to the riboflavin transporter family.

It is found in the cell membrane. It carries out the reaction riboflavin(in) = riboflavin(out). Functionally, plasma membrane transporter mediating the uptake by cells of the water soluble vitamin B2/riboflavin that plays a key role in biochemical oxidation-reduction reactions of the carbohydrate, lipid, and amino acid metabolism. The chain is Solute carrier family 52, riboflavin transporter, member 3 (SLC52A3) from Ailuropoda melanoleuca (Giant panda).